Consider the following 143-residue polypeptide: uncharacterized protein (143 aa).

This is an uncharacterized protein from Mycobacterium tuberculosis (strain CDC 1551 / Oshkosh).